The chain runs to 180 residues: UPF0227 protein YpsIP31758_1593 (180 aa).

It belongs to the UPF0227 family.

The sequence is that of UPF0227 protein YpsIP31758_1593 from Yersinia pseudotuberculosis serotype O:1b (strain IP 31758).